We begin with the raw amino-acid sequence, 145 residues long: MKMKPAERRRARQSAVQAIYQWQITKLSAGQIIEQFSTDQDLSKTDVPYFKELLTGVIHRVDFLDEKLSPYLSRKIEDVDMVDKAVLRLAMFELTQRTDIPHKVVLNEAIELAKDFATDESYKFVNGVLDKALRSLKLREEEQGK.

This sequence belongs to the NusB family.

In terms of biological role, involved in transcription antitermination. Required for transcription of ribosomal RNA (rRNA) genes. Binds specifically to the boxA antiterminator sequence of the ribosomal RNA (rrn) operons. The sequence is that of Transcription antitermination protein NusB from Psychromonas ingrahamii (strain DSM 17664 / CCUG 51855 / 37).